The sequence spans 483 residues: ATP-dependent RNA helicase DDX25 (483 aa).

Positions 97 to 125 (KSFEELHLKNELLRGIYAMGFNRPSKIQE) match the Q motif motif. Residues 130–300 (MMLADPPQNL…ERIVPDPNII (171 aa)) enclose the Helicase ATP-binding domain. 143–150 (SQSGTGKT) contacts ATP. Residues 247 to 250 (DEAD) carry the DEAD box motif. The Helicase C-terminal domain occupies 311–478 (NIQQFYDQCE…KLNSMDMDEM (168 aa)).

Belongs to the DEAD box helicase family. An mRNA component of germ plasm. Localizes to the granulo-fibrillar material (GFM) of the mitochondrial cloud in stage I oocytes. Associated, at a low level, with the periphery of mature germinal granules in later stage oocytes. Localizes to the vegetal cortex in stage II oocytes and segregates with germ plasm during early embryogenesis. In adults, expression is restricted to the ovary and, at a lower level, to spermatogonia, spermatocytes and spermatids of the testis.

It localises to the cytoplasm. The protein localises to the nucleus. It carries out the reaction ATP + H2O = ADP + phosphate + H(+). Its function is as follows. ATP-dependent RNA helicase. The polypeptide is ATP-dependent RNA helicase DDX25 (Xenopus laevis (African clawed frog)).